The primary structure comprises 373 residues: Outer membrane protein assembly factor BamC (373 aa).

The first 16 residues, 1–16 (MLKQVTPLVLIAAVTA), serve as a signal peptide directing secretion. Cys-17 carries N-palmitoyl cysteine lipidation. Cys-17 is lipidated: S-diacylglycerol cysteine.

Belongs to the BamC family. In terms of assembly, part of the Bam complex.

It localises to the cell outer membrane. Its function is as follows. Part of the outer membrane protein assembly complex, which is involved in assembly and insertion of beta-barrel proteins into the outer membrane. The polypeptide is Outer membrane protein assembly factor BamC (Shewanella sediminis (strain HAW-EB3)).